The sequence spans 37 residues: Cytochrome bd-I ubiquinol oxidase subunit X (37 aa).

A helical transmembrane segment spans residues 4-24; sequence FAWILGTLLACSFGVITALAL.

This sequence belongs to the cytochrome ubiquinol oxidase subunit X family. May be a subunit of cytochrome bd-I ubiquinol oxidase. Probably interacts with CydA and CydB.

Its subcellular location is the cell inner membrane. The catalysed reaction is 2 a ubiquinol + O2(in) + 4 H(+)(in) = 2 a ubiquinone + 2 H2O(in) + 4 H(+)(out). The protein operates within energy metabolism; oxidative phosphorylation. Required for correct functioning of cytochrome bd-I oxidase. This protein and AppX may have some functional overlap. The protein is Cytochrome bd-I ubiquinol oxidase subunit X (cydX) of Escherichia coli (strain K12).